A 528-amino-acid chain; its full sequence is Peptide chain release factor 3 (528 aa).

Residues 11–279 (SDRRTFAIIS…GFVEWAPAPI (269 aa)) form the tr-type G domain. Residues 20–27 (SHPDAGKT), 88–92 (DTPGH), and 142–145 (NKMD) contribute to the GTP site.

Belongs to the TRAFAC class translation factor GTPase superfamily. Classic translation factor GTPase family. PrfC subfamily.

The protein localises to the cytoplasm. Increases the formation of ribosomal termination complexes and stimulates activities of RF-1 and RF-2. It binds guanine nucleotides and has strong preference for UGA stop codons. It may interact directly with the ribosome. The stimulation of RF-1 and RF-2 is significantly reduced by GTP and GDP, but not by GMP. This is Peptide chain release factor 3 from Marinomonas sp. (strain MWYL1).